We begin with the raw amino-acid sequence, 452 residues long: Peptidase M20 domain-containing protein SMAC_03666.2 (452 aa).

An N-terminal signal peptide occupies residues 1-28; the sequence is MKATSNLLLLWGTSLLSPSSAFVIDNHH. Residue N140 is glycosylated (N-linked (GlcNAc...) asparagine). Zn(2+) is bound at residue D186. E220 functions as the Proton acceptor in the catalytic mechanism. E221 contacts Zn(2+). N315 is a glycosylation site (N-linked (GlcNAc...) asparagine).

Belongs to the peptidase M20A family. Zn(2+) serves as cofactor.

It is found in the secreted. This Sordaria macrospora (strain ATCC MYA-333 / DSM 997 / K(L3346) / K-hell) protein is Peptidase M20 domain-containing protein SMAC_03666.2.